The chain runs to 589 residues: Transmembrane 9 superfamily member 1 (589 aa).

The first 24 residues, 1 to 24 (MPSSSSAAVLVFLLLVSLLTPTFA), serve as a signal peptide directing secretion. The Lumenal portion of the chain corresponds to 25–222 (SDSDHKYQAE…YPFFEHQIHW (198 aa)). Residues 223–243 (FSIFNSFMMVIFLTGLVSMIL) traverse the membrane as a helical segment. At 244–293 (MRTLRNDYAKYAREDDDLESLERDVSEESGWKLVHGDVFRPASSLVLLSA) the chain is on the cytoplasmic side. Residues 294-314 (VVGTGAQLALLVLLVILMAIV) traverse the membrane as a helical segment. Residues 315 to 321 (GTLYVGR) are Lumenal-facing. Residues 322 to 342 (GAIVTTFIVCYALTSFVSGYV) traverse the membrane as a helical segment. At 343–364 (SGGMYSRSGGKHWIKCMVLTAS) the chain is on the cytoplasmic side. A helical transmembrane segment spans residues 365-385 (LFPFLCFGIGFLLNTIAIFYG). Topologically, residues 386-395 (SLAAIPFGTM) are lumenal. Residues 396–416 (VVVFVIWGFISFPLALLGTVV) form a helical membrane-spanning segment. Residues 417 to 448 (GRNWSGAPNNPCRVKTIPRPIPEKKWYLTPSV) lie on the Cytoplasmic side of the membrane. A helical membrane pass occupies residues 449–469 (VSLMGGLLPFGSIFIEMYFVF). At 470–481 (TSFWNYKVYYVY) the chain is on the lumenal side. Residues 482 to 502 (GFMLLVFVILVIVTVCVTIVG) form a helical membrane-spanning segment. Over 503 to 518 (TYFLLNAENYHWQWTS) the chain is Cytoplasmic. Residues 519-539 (FFSAASTAVYVYLYSIYYYYV) traverse the membrane as a helical segment. Residues 540–550 (KTKMSGFFQTS) lie on the Lumenal side of the membrane. Residues 551 to 571 (FYFGYTMMFCLGLGILCGAVG) traverse the membrane as a helical segment. At 572 to 589 (YLGSNLFVRRIYRNIKCD) the chain is on the cytoplasmic side. Residues 578-583 (FVRRIY) carry the Endoplasmic reticulum export signal motif. The Golgi retention signal signature appears at 587–589 (KCD).

This sequence belongs to the nonaspanin (TM9SF) (TC 9.A.2) family. As to expression, ubiquitous.

The protein resides in the endosome membrane. Its subcellular location is the golgi apparatus membrane. The polypeptide is Transmembrane 9 superfamily member 1 (Arabidopsis thaliana (Mouse-ear cress)).